A 501-amino-acid polypeptide reads, in one-letter code: Group 3 secretory phospholipase A2 (501 aa).

An N-terminal signal peptide occupies residues methionine 1–glycine 19. The disordered stretch occupies residues arginine 119–valine 139. The interval glycine 150 to threonine 291 is phospholipase A2-like. Residues tryptophan 158, glycine 160, and glycine 162 each contribute to the Ca(2+) site. Cystine bridges form between cysteine 159/cysteine 181, cysteine 180/cysteine 220, cysteine 187/cysteine 213, and cysteine 211/cysteine 244. An N-linked (GlcNAc...) asparagine glycan is attached at asparagine 167. Histidine 184 is an active-site residue. Ca(2+) is bound at residue aspartate 185. Residue aspartate 214 is part of the active site. A glycan (N-linked (GlcNAc...) asparagine) is linked at asparagine 280. Positions serine 284–alanine 298 are enriched in polar residues. The disordered stretch occupies residues serine 284–aspartate 339. Residues asparagine 325 and asparagine 403 are each glycosylated (N-linked (GlcNAc...) asparagine).

It belongs to the phospholipase A2 family. Requires Ca(2+) as cofactor. In terms of processing, N-glycosylation does not affect the catalytic activity, but is required for proper secretion. A nonglycosylated form was observed in several cell types. In several cell types, the N- and C-termini are cleaved off.

It localises to the secreted. Its subcellular location is the cell membrane. It is found in the cytoplasm. The protein localises to the cytoskeleton. The protein resides in the microtubule organizing center. It localises to the centrosome. Its subcellular location is the centriole. It is found in the recycling endosome. The enzyme catalyses a 1,2-diacyl-sn-glycero-3-phosphocholine + H2O = a 1-acyl-sn-glycero-3-phosphocholine + a fatty acid + H(+). The catalysed reaction is 1-hexadecanoyl-2-(9Z,12Z-octadecadienoyl)-sn-glycero-3-phosphocholine + H2O = (9Z,12Z)-octadecadienoate + 1-hexadecanoyl-sn-glycero-3-phosphocholine + H(+). It catalyses the reaction 1-hexadecanoyl-2-(5Z,8Z,11Z,14Z-eicosatetraenoyl)-sn-glycero-3-phosphocholine + H2O = 1-hexadecanoyl-sn-glycero-3-phosphocholine + (5Z,8Z,11Z,14Z)-eicosatetraenoate + H(+). It carries out the reaction 1-hexadecanoyl-2-(9Z,12Z-octadecadienoyl)-sn-glycero-3-phosphoethanolamine + H2O = 1-hexadecanoyl-sn-glycero-3-phosphoethanolamine + (9Z,12Z)-octadecadienoate + H(+). The enzyme catalyses 1-hexadecanoyl-2-(5Z,8Z,11Z,14Z-eicosatetraenoyl)-sn-glycero-3-phosphoethanolamine + H2O = 1-hexadecanoyl-sn-glycero-3-phosphoethanolamine + (5Z,8Z,11Z,14Z)-eicosatetraenoate + H(+). Secretory calcium-dependent phospholipase A2 that primarily targets extracellular phospholipids. Hydrolyzes the ester bond of the fatty acyl group attached at sn-2 position of phospholipids without apparent head group selectivity. Contributes to phospholipid remodeling of low-density lipoprotein (LDL) and high-density lipoprotein (HDL) particles. Hydrolyzes LDL phospholipids releasing unsaturated fatty acids that regulate macrophage differentiation toward foam cells. May act in an autocrine and paracrine manner. Secreted by immature mast cells, acts on nearby fibroblasts upstream to PTDGS to synthesize prostaglandin D2 (PGD2), which in turn promotes mast cell maturation and degranulation via PTGDR. Secreted by epididymal epithelium, acts on immature sperm cells within the duct, modulating the degree of unsaturation of the fatty acyl components of phosphatidylcholines required for acrosome assembly and sperm cell motility. Facilitates the replacement of fatty acyl chains in phosphatidylcholines in sperm membranes from omega-6 and omega-9 to omega-3 polyunsaturated fatty acids (PUFAs). Coupled to lipoxygenase pathway, may process omega-6 PUFAs to generate oxygenated lipid mediators in the male reproductive tract. At pericentrosomal preciliary compartment, negatively regulates ciliogenesis likely by regulating endocytotic recycling of ciliary membrane protein. Coupled to cyclooxygenase pathway provides arachidonate to generate prostaglandin E2 (PGE2), a potent immunomodulatory lipid in inflammation and tumorigenesis. At colonic epithelial barrier, preferentially hydrolyzes phospholipids having arachidonate and docosahexaenoate at sn-2 position, contributing to the generation of oxygenated metabolites involved in colonic stem cell homeostasis. Releases C16:0 and C18:0 lysophosphatidylcholine subclasses from neuron plasma membranes and promotes neurite outgrowth and neuron survival. The polypeptide is Group 3 secretory phospholipase A2 (PLA2G3) (Bos taurus (Bovine)).